The sequence spans 294 residues: N-acetylmuramic acid 6-phosphate etherase (294 aa).

An SIS domain is found at 54-217; sequence VIKSFEEEGR…STASMIGVGK (164 aa). The Proton donor role is filled by Glu82. The active site involves Glu113.

Belongs to the GCKR-like family. MurNAc-6-P etherase subfamily. As to quaternary structure, homodimer.

The enzyme catalyses N-acetyl-D-muramate 6-phosphate + H2O = N-acetyl-D-glucosamine 6-phosphate + (R)-lactate. It functions in the pathway amino-sugar metabolism; N-acetylmuramate degradation. In terms of biological role, specifically catalyzes the cleavage of the D-lactyl ether substituent of MurNAc 6-phosphate, producing GlcNAc 6-phosphate and D-lactate. The sequence is that of N-acetylmuramic acid 6-phosphate etherase from Bacillus cereus (strain B4264).